The following is a 253-amino-acid chain: Endonuclease NucS (253 aa).

The protein belongs to the NucS endonuclease family.

The protein resides in the cytoplasm. Cleaves both 3' and 5' ssDNA extremities of branched DNA structures. In Pyrococcus horikoshii (strain ATCC 700860 / DSM 12428 / JCM 9974 / NBRC 100139 / OT-3), this protein is Endonuclease NucS.